The primary structure comprises 292 residues: RNA polymerase II transcriptional coactivator SUB1 (292 aa).

Disordered regions lie at residues 1 to 31 (MSYY…GGMP) and 117 to 292 (LLSD…SEEE). Over residues 20 to 31 (LSNSNNNNGGMP) the composition is skewed to low complexity. Ser-119 bears the Phosphoserine mark. Composition is skewed to basic and acidic residues over residues 133 to 166 (NNDK…LEPR), 179 to 191 (PHEE…EREA), 204 to 240 (KQQE…KIAE), and 251 to 267 (AKKE…KDAN). 3 positions are modified to phosphoserine: Ser-268, Ser-269, and Ser-289.

It belongs to the transcriptional coactivator PC4 family.

The protein localises to the nucleus. Functionally, plays a role in the release of TFIIB from the transcription complex during transcription initiation. Binds to TFIIB and specifically inhibits the formation of the TBP-TFIIB-promoter complexes. The sequence is that of RNA polymerase II transcriptional coactivator SUB1 (SUB1) from Saccharomyces cerevisiae (strain ATCC 204508 / S288c) (Baker's yeast).